The following is a 77-amino-acid chain: Large ribosomal subunit protein bL31 (77 aa).

Belongs to the bacterial ribosomal protein bL31 family. Type A subfamily. As to quaternary structure, part of the 50S ribosomal subunit.

In terms of biological role, binds the 23S rRNA. The polypeptide is Large ribosomal subunit protein bL31 (Microcystis aeruginosa (strain NIES-843 / IAM M-2473)).